We begin with the raw amino-acid sequence, 264 residues long: Indole-3-glycerol phosphate synthase (264 aa).

It belongs to the TrpC family.

The catalysed reaction is 1-(2-carboxyphenylamino)-1-deoxy-D-ribulose 5-phosphate + H(+) = (1S,2R)-1-C-(indol-3-yl)glycerol 3-phosphate + CO2 + H2O. It functions in the pathway amino-acid biosynthesis; L-tryptophan biosynthesis; L-tryptophan from chorismate: step 4/5. The sequence is that of Indole-3-glycerol phosphate synthase from Albidiferax ferrireducens (strain ATCC BAA-621 / DSM 15236 / T118) (Rhodoferax ferrireducens).